Reading from the N-terminus, the 384-residue chain is O-phospho-L-seryl-tRNA:Cys-tRNA synthase 1 (384 aa).

Residues 88-89 (AR), N195, and 218-220 (SGH) contribute to the pyridoxal 5'-phosphate site. The residue at position 221 (K221) is an N6-(pyridoxal phosphate)lysine.

It belongs to the SepCysS family. As to quaternary structure, homodimer. Interacts with SepRS. The cofactor is pyridoxal 5'-phosphate.

The enzyme catalyses O-phospho-L-seryl-tRNA(Cys) + hydrogen sulfide + H(+) = L-cysteinyl-tRNA(Cys) + phosphate. Its function is as follows. Converts O-phospho-L-seryl-tRNA(Cys) (Sep-tRNA(Cys)) to L-cysteinyl-tRNA(Cys) (Cys-tRNA(Cys)). In Methanocella arvoryzae (strain DSM 22066 / NBRC 105507 / MRE50), this protein is O-phospho-L-seryl-tRNA:Cys-tRNA synthase 1.